The chain runs to 134 residues: UPF0719 transmembrane protein YshE (134 aa).

The next 4 membrane-spanning stretches (helical) occupy residues 10–30 (VEIAAYYSVAVLCLVLFLTVF), 48–68 (AVAMATGGKILGIANVFQHSI), 78–98 (IGWGVYGFVMLLISYFIFEFL), and 114–134 (AVGFISFVISVGLSFVVAAGI).

This sequence belongs to the UPF0719 family.

The protein resides in the cell membrane. The sequence is that of UPF0719 transmembrane protein YshE (yshE) from Bacillus subtilis (strain 168).